We begin with the raw amino-acid sequence, 353 residues long: Soluble interferon alpha/beta receptor OPG204 (353 aa).

The N-terminal stretch at 1–21 (MTMKMMVHIYFVSLSLLLLLF) is a signal peptide. Ig-like C2-type domains follow at residues 67-139 (LGEP…KNGD) and 157-239 (PKTY…IVVS). Disulfide bonds link cysteine 75–cysteine 131 and cysteine 174–cysteine 223. 5 N-linked (GlcNAc...) asparagine; by host glycosylation sites follow: asparagine 119, asparagine 184, asparagine 263, asparagine 271, and asparagine 323. One can recognise an Ig-like V-type domain in the interval 248-347 (PSQDHRFKLI…HNYYFEKTLT (100 aa)). A disulfide bridge connects residues cysteine 274 and cysteine 335.

This sequence belongs to the interleukin-1 receptor family. Interacts with host IFNA1.

The protein localises to the secreted. Functionally, counteracts the antiviral effects of host IFN-alpha/beta and key IFN-inducible proteins involved in viral RNA degradation suxh as host OAS1. Acts as a soluble IFN-alpha receptor and thus inhibits the interaction between host IFN-alpha and its receptor. The chain is Soluble interferon alpha/beta receptor OPG204 (OPG204) from Homo sapiens (Human).